Here is a 122-residue protein sequence, read N- to C-terminus: Large ribosomal subunit protein uL14 (122 aa).

It belongs to the universal ribosomal protein uL14 family. As to quaternary structure, part of the 50S ribosomal subunit. Forms a cluster with proteins L3 and L19. In the 70S ribosome, L14 and L19 interact and together make contacts with the 16S rRNA in bridges B5 and B8.

Its function is as follows. Binds to 23S rRNA. Forms part of two intersubunit bridges in the 70S ribosome. The chain is Large ribosomal subunit protein uL14 from Nostoc punctiforme (strain ATCC 29133 / PCC 73102).